Consider the following 150-residue polypeptide: C-type lectin 16 (150 aa).

A signal peptide spans 1-27 (MKRVRVKVIFVSFGLLVVFLSLSGTAA). 3 disulfides stabilise this stretch: Cys29–Cys40, Cys57–Cys146, and Cys123–Cys138. Residues 36–147 (YEGHCYKPFN…CRMLARFVCE (112 aa)) form the C-type lectin domain.

This sequence belongs to the snaclec family. In terms of assembly, heteromultimer; disulfide-linked. In terms of tissue distribution, expressed by the venom gland.

The protein resides in the secreted. Its function is as follows. Interferes with one step of hemostasis (modulation of platelet aggregation, or coagulation cascade, for example). The polypeptide is C-type lectin 16 (Crotalus adamanteus (Eastern diamondback rattlesnake)).